Reading from the N-terminus, the 463-residue chain is NADH dehydrogenase [ubiquinone] iron-sulfur protein 2, mitochondrial (463 aa).

The transit peptide at 1-33 (MAALRALCGFRGVAAQVLRPGAGVRLPIQPSRG) directs the protein to the mitochondrion. An N6-acetyllysine modification is found at lysine 62. Position 118 is a symmetric dimethylarginine (arginine 118). 3 residues coordinate [4Fe-4S] cluster: cysteine 326, cysteine 332, and cysteine 347.

Belongs to the complex I 49 kDa subunit family. In terms of assembly, core subunit of respiratory chain NADH dehydrogenase (Complex I) which is composed of 45 different subunits. Component of the iron-sulfur (IP) fragment of the enzyme. Interacts with NDUFAF3. Interacts with NDUFAF7. Interacts with CERS2. Requires [4Fe-4S] cluster as cofactor. Dimethylation at Arg-118 by NDUFAF7 takes place after NDUFS2 assembles into the complex I, leading to stabilize the early intermediate complex.

The protein resides in the mitochondrion inner membrane. The enzyme catalyses a ubiquinone + NADH + 5 H(+)(in) = a ubiquinol + NAD(+) + 4 H(+)(out). Its function is as follows. Core subunit of the mitochondrial membrane respiratory chain NADH dehydrogenase (Complex I) which catalyzes electron transfer from NADH through the respiratory chain, using ubiquinone as an electron acceptor. Essential for the catalytic activity of complex I. Essential for the assembly of complex I. Redox-sensitive, critical component of the oxygen-sensing pathway in the pulmonary vasculature which plays a key role in acute pulmonary oxygen-sensing and hypoxic pulmonary vasoconstriction. Plays an important role in carotid body sensing of hypoxia. Essential for glia-like neural stem and progenitor cell proliferation, differentiation and subsequent oligodendrocyte or neuronal maturation. The protein is NADH dehydrogenase [ubiquinone] iron-sulfur protein 2, mitochondrial (NDUFS2) of Homo sapiens (Human).